Reading from the N-terminus, the 523-residue chain is Cyclin-dependent kinase 17 (523 aa).

Ser9 bears the Phosphoserine mark. Positions 30 to 55 (TIEESSSKDNEPIVKNGRPPTSHSVH) are disordered. A phosphoserine mark is found at Ser80, Ser92, and Ser105. Residues 103–123 (MGSDGESDQASGTSSDEVQSP) form a disordered region. Polar residues predominate over residues 110 to 123 (DQASGTSSDEVQSP). Residues Ser137, Ser146, Ser165, and Ser180 each carry the phosphoserine modification. A Protein kinase domain is found at 192–473 (YIKLEKLGEG…AEEAMKHVYF (282 aa)). Residues 198 to 206 (LGEGTYATV) and Lys221 contribute to the ATP site. The active-site Proton acceptor is Asp313. The disordered stretch occupies residues 501-523 (PGFRNSSYPETGHGKNRRQSMLF). Over residues 514–523 (GKNRRQSMLF) the composition is skewed to basic residues.

The protein belongs to the protein kinase superfamily. CMGC Ser/Thr protein kinase family. CDC2/CDKX subfamily. Found in a complex containing CABLES1, CDK16 and TDRD7. Interacts with TDRD7.

The enzyme catalyses L-seryl-[protein] + ATP = O-phospho-L-seryl-[protein] + ADP + H(+). It catalyses the reaction L-threonyl-[protein] + ATP = O-phospho-L-threonyl-[protein] + ADP + H(+). In terms of biological role, may play a role in terminally differentiated neurons. Has a Ser/Thr-phosphorylating activity for histone H1. The polypeptide is Cyclin-dependent kinase 17 (Cdk17) (Mus musculus (Mouse)).